The chain runs to 323 residues: Glutamyl-Q tRNA(Asp) synthetase (323 aa).

L-glutamate is bound by residues 5–9 and Glu41; that span reads RFAPT. The short motif at 8–18 is the 'HIGH' region element; it reads PTPSGALHLGN. The Zn(2+) site is built by Cys105, Cys107, Tyr129, and Cys133. Residues Tyr193 and Arg211 each contribute to the L-glutamate site. The 'KMSKS' region motif lies at 249–253; it reads RLAKR. Lys252 contributes to the ATP binding site.

Belongs to the class-I aminoacyl-tRNA synthetase family. GluQ subfamily. The cofactor is Zn(2+).

Its function is as follows. Catalyzes the tRNA-independent activation of glutamate in presence of ATP and the subsequent transfer of glutamate onto a tRNA(Asp). Glutamate is transferred on the 2-amino-5-(4,5-dihydroxy-2-cyclopenten-1-yl) moiety of the queuosine in the wobble position of the QUC anticodon. The chain is Glutamyl-Q tRNA(Asp) synthetase from Symbiobacterium thermophilum (strain DSM 24528 / JCM 14929 / IAM 14863 / T).